Reading from the N-terminus, the 178-residue chain is uncharacterized protein (178 aa).

The signal sequence occupies residues 1-20 (MKKLLVASLALLILTPVALA).

This is an uncharacterized protein from Archaeoglobus fulgidus (strain ATCC 49558 / DSM 4304 / JCM 9628 / NBRC 100126 / VC-16).